We begin with the raw amino-acid sequence, 357 residues long: Histidinol-phosphate aminotransferase 2 (357 aa).

An N6-(pyridoxal phosphate)lysine modification is found at Lys215.

This sequence belongs to the class-II pyridoxal-phosphate-dependent aminotransferase family. Histidinol-phosphate aminotransferase subfamily. Homodimer. Pyridoxal 5'-phosphate serves as cofactor.

The catalysed reaction is L-histidinol phosphate + 2-oxoglutarate = 3-(imidazol-4-yl)-2-oxopropyl phosphate + L-glutamate. It participates in amino-acid biosynthesis; L-histidine biosynthesis; L-histidine from 5-phospho-alpha-D-ribose 1-diphosphate: step 7/9. The chain is Histidinol-phosphate aminotransferase 2 from Thiobacillus denitrificans (strain ATCC 25259 / T1).